The primary structure comprises 23 residues: Large ribosomal subunit protein uL10 (23 aa).

Belongs to the universal ribosomal protein uL10 family. In terms of assembly, part of the ribosomal stalk of the 50S ribosomal subunit. The N-terminus interacts with L11 and the large rRNA to form the base of the stalk. The C-terminus forms an elongated spine to which L12 dimers bind in a sequential fashion forming a multimeric L10(L12)X complex.

In terms of biological role, forms part of the ribosomal stalk, playing a central role in the interaction of the ribosome with GTP-bound translation factors. The chain is Large ribosomal subunit protein uL10 (rplJ) from Klebsiella pneumoniae.